We begin with the raw amino-acid sequence, 232 residues long: Flagellar L-ring protein (232 aa).

An N-terminal signal peptide occupies residues 1–15 (MKKVLFYVLPFAFFG). Cys16 carries N-palmitoyl cysteine lipidation. Residue Cys16 is the site of S-diacylglycerol cysteine attachment.

It belongs to the FlgH family. In terms of assembly, the basal body constitutes a major portion of the flagellar organelle and consists of four rings (L,P,S, and M) mounted on a central rod.

It is found in the cell outer membrane. The protein resides in the bacterial flagellum basal body. In terms of biological role, assembles around the rod to form the L-ring and probably protects the motor/basal body from shearing forces during rotation. The protein is Flagellar L-ring protein of Campylobacter jejuni subsp. jejuni serotype O:6 (strain 81116 / NCTC 11828).